Here is a 356-residue protein sequence, read N- to C-terminus: DNA polymerase IV (356 aa).

A UmuC domain is found at Met-1 to Gly-188. The Mg(2+) site is built by Asp-11 and Asp-106. The active site involves Glu-107.

This sequence belongs to the DNA polymerase type-Y family. In terms of assembly, monomer. The cofactor is Mg(2+).

Its subcellular location is the cytoplasm. It catalyses the reaction DNA(n) + a 2'-deoxyribonucleoside 5'-triphosphate = DNA(n+1) + diphosphate. Its function is as follows. Poorly processive, error-prone DNA polymerase involved in untargeted mutagenesis. Copies undamaged DNA at stalled replication forks, which arise in vivo from mismatched or misaligned primer ends. These misaligned primers can be extended by PolIV. Exhibits no 3'-5' exonuclease (proofreading) activity. May be involved in translesional synthesis, in conjunction with the beta clamp from PolIII. This Listeria monocytogenes serovar 1/2a (strain ATCC BAA-679 / EGD-e) protein is DNA polymerase IV.